A 192-amino-acid polypeptide reads, in one-letter code: Intraflagellar transport protein 22 (192 aa).

GTP contacts are provided by residues 12-19 (GPQRTGKT) and 62-69 (WDVSGSVQ).

It belongs to the small GTPase superfamily. Rab family. In terms of assembly, component of the IFT complex B, composed of IFT88, IFT70, IFT52, IFT46, IFT27, IFT25 and IFT22.

Its subcellular location is the cell projection. It localises to the cilium. It is found in the flagellum. Functionally, component of the intraflagellar transport (IFT) complex B. Functions in regulating the cellular pool size of both complex A and complex B and thus plays a critical role in determining the cellular availability of IFT particles. In Chlamydomonas reinhardtii (Chlamydomonas smithii), this protein is Intraflagellar transport protein 22 (FAP9).